The following is a 170-amino-acid chain: Lipoprotein signal peptidase (170 aa).

3 consecutive transmembrane segments (helical) span residues 12–32 (WYWI…WVLS), 67–87 (WQRW…SVWL), and 94–113 (MWRL…GNLI). Residues D123 and D141 contribute to the active site. The helical transmembrane segment at 133–153 (HFPAFNIADSAICIGAGLIIL) threads the bilayer.

This sequence belongs to the peptidase A8 family.

It localises to the cell inner membrane. It carries out the reaction Release of signal peptides from bacterial membrane prolipoproteins. Hydrolyzes -Xaa-Yaa-Zaa-|-(S,diacylglyceryl)Cys-, in which Xaa is hydrophobic (preferably Leu), and Yaa (Ala or Ser) and Zaa (Gly or Ala) have small, neutral side chains.. It functions in the pathway protein modification; lipoprotein biosynthesis (signal peptide cleavage). Its function is as follows. This protein specifically catalyzes the removal of signal peptides from prolipoproteins. The protein is Lipoprotein signal peptidase of Shewanella piezotolerans (strain WP3 / JCM 13877).